Reading from the N-terminus, the 317-residue chain is 4-hydroxy-3-methylbut-2-enyl diphosphate reductase (317 aa).

Cys12 lines the [4Fe-4S] cluster pocket. Residues His41 and His74 each contribute to the (2E)-4-hydroxy-3-methylbut-2-enyl diphosphate site. Positions 41 and 74 each coordinate dimethylallyl diphosphate. The isopentenyl diphosphate site is built by His41 and His74. Cys97 contacts [4Fe-4S] cluster. His125 contacts (2E)-4-hydroxy-3-methylbut-2-enyl diphosphate. Dimethylallyl diphosphate is bound at residue His125. Isopentenyl diphosphate is bound at residue His125. Residue Glu127 is the Proton donor of the active site. Thr168 is a (2E)-4-hydroxy-3-methylbut-2-enyl diphosphate binding site. Position 198 (Cys198) interacts with [4Fe-4S] cluster. Residues Ser226, Ser227, Asn228, and Ser270 each contribute to the (2E)-4-hydroxy-3-methylbut-2-enyl diphosphate site. Ser226, Ser227, Asn228, and Ser270 together coordinate dimethylallyl diphosphate. 4 residues coordinate isopentenyl diphosphate: Ser226, Ser227, Asn228, and Ser270.

This sequence belongs to the IspH family. In terms of assembly, homodimer. The cofactor is [4Fe-4S] cluster.

It carries out the reaction isopentenyl diphosphate + 2 oxidized [2Fe-2S]-[ferredoxin] + H2O = (2E)-4-hydroxy-3-methylbut-2-enyl diphosphate + 2 reduced [2Fe-2S]-[ferredoxin] + 2 H(+). The catalysed reaction is dimethylallyl diphosphate + 2 oxidized [2Fe-2S]-[ferredoxin] + H2O = (2E)-4-hydroxy-3-methylbut-2-enyl diphosphate + 2 reduced [2Fe-2S]-[ferredoxin] + 2 H(+). The protein operates within isoprenoid biosynthesis; dimethylallyl diphosphate biosynthesis; dimethylallyl diphosphate from (2E)-4-hydroxy-3-methylbutenyl diphosphate: step 1/1. Its pathway is isoprenoid biosynthesis; isopentenyl diphosphate biosynthesis via DXP pathway; isopentenyl diphosphate from 1-deoxy-D-xylulose 5-phosphate: step 6/6. Its function is as follows. Catalyzes the conversion of 1-hydroxy-2-methyl-2-(E)-butenyl 4-diphosphate (HMBPP) into a mixture of isopentenyl diphosphate (IPP) and dimethylallyl diphosphate (DMAPP). Acts in the terminal step of the DOXP/MEP pathway for isoprenoid precursor biosynthesis. In Edwardsiella ictaluri (strain 93-146), this protein is 4-hydroxy-3-methylbut-2-enyl diphosphate reductase.